A 183-amino-acid chain; its full sequence is Mid1-interacting protein 1 (183 aa).

Met-1 is modified (N-acetylmethionine). A phosphoserine mark is found at Ser-75 and Ser-79.

This sequence belongs to the SPOT14 family. As to quaternary structure, homodimer in the absence of THRSP. Heterodimer with THRSP. The homodimer interacts with ACACA and ACACB. Promotes polymerization of Acetyl-CoA carboxylase to form complexes that contain MID1IP1 and ACACA and/or ACACB. Interaction with THRSP interferes with ACACA binding.

The protein resides in the nucleus. Its subcellular location is the cytoplasm. The protein localises to the cytoskeleton. Its function is as follows. Plays a role in the regulation of lipogenesis in liver. Up-regulates ACACA enzyme activity. Required for efficient lipid biosynthesis, including triacylglycerol, diacylglycerol and phospholipid. Involved in stabilization of microtubules. This chain is Mid1-interacting protein 1 (MID1IP1), found in Homo sapiens (Human).